We begin with the raw amino-acid sequence, 442 residues long: MNFTTKRINSANAVINGSIALSKIEEKFEKVIKKIAKNIKIDGFRKGKVPTQVIKTRYKEQIDQDAQQEAIQELLTAALKELEIQPNSLIGNPMISQFNKLNDKIELEIKLGITPTLNLDNVEDYTPEVKLKTISKNLIDERLEEIAKNRAPLNEITQERTLQKDDTAQIDFEGFVDGKAFEGGKGENFNLAIGSNQFIPGFEDALIGMKNGEKRTIKVTFPEQYQAKHLAGKEASFDVTLHKILQKELPKIDDEFAKSIAGEESNLQSLKDMIKEQLEMEQKTEIYNKELKEKLVEILLKNISFDLPDLIVEQEMDILFRNALSQLKPEEFDKIKNNQDEAKKQRETHKDEARKSVQITFIMDALAKKYNIAINDNEVLQTIYYEAMMMGQDPKATLEHYQKNNLVPAIKMTMLEDRVLHYLLDKKFEESKANTNAQKDNQ.

In terms of domain architecture, PPIase FKBP-type spans 165–250; the sequence is DDTAQIDFEG…LHKILQKELP (86 aa).

This sequence belongs to the FKBP-type PPIase family. Tig subfamily.

The protein resides in the cytoplasm. It catalyses the reaction [protein]-peptidylproline (omega=180) = [protein]-peptidylproline (omega=0). Functionally, involved in protein export. Acts as a chaperone by maintaining the newly synthesized protein in an open conformation. Functions as a peptidyl-prolyl cis-trans isomerase. In Helicobacter hepaticus (strain ATCC 51449 / 3B1), this protein is Trigger factor.